The primary structure comprises 515 residues: Gap junction alpha-9 protein (515 aa).

The Cytoplasmic segment spans residues 1-19 (MGDWNLLGDTLEEVHIHST). The helical transmembrane segment at 20 to 40 (MIGKIWLTILFIFRMLVLGVA) threads the bilayer. Residues 41–77 (AEDVWNDEQSGFICNTEQPGCRNVCYDQAFPISLIRY) are Extracellular-facing. The helical transmembrane segment at 78–98 (WVLQVIFVSSPSLVYMGHALY) threads the bilayer. Over 99-166 (RLRVLEEERQ…YVIHIFTRSV (68 aa)) the chain is Cytoplasmic. Residues 167-187 (VEVGFMIGQYLLYGFHLEPLF) form a helical membrane-spanning segment. Over 188–209 (KCHGHPCPNIIDCFVSRPTEKT) the chain is Extracellular. Residues 210 to 230 (IFLLFMQSIATISLFLNILEI) form a helical membrane-spanning segment. Residues 231 to 515 (FHLGFKKIKR…GRRVPTDLQI (285 aa)) are Cytoplasmic-facing. Basic and acidic residues predominate over residues 370-380 (KRETEGKDSKR). Disordered regions lie at residues 370–400 (KRET…GENN) and 428–472 (SSTE…NTAD). Residues 456–472 (PPSQGDSQSLDIPNTAD) are compositionally biased toward polar residues.

The protein belongs to the connexin family. Alpha-type (group II) subfamily. In terms of assembly, a connexon is composed of a hexamer of connexins. Highly abundant in skeletal muscle. Also detected in testis.

The protein localises to the cell membrane. It is found in the cell junction. The protein resides in the gap junction. Its function is as follows. One gap junction consists of a cluster of closely packed pairs of transmembrane channels, the connexons, through which materials of low MW diffuse from one cell to a neighboring cell. The chain is Gap junction alpha-9 protein (GJA9) from Homo sapiens (Human).